Reading from the N-terminus, the 378-residue chain is Carbamoyl phosphate synthase small chain (378 aa).

The CPSase stretch occupies residues 1-189 (MTKPAILALA…DSHPEIAASE (189 aa)). Positions 47, 241, and 243 each coordinate L-glutamine. The Glutamine amidotransferase type-1 domain maps to 193–378 (HVVAYDYGVK…RFIDAMAKRR (186 aa)). C269 acts as the Nucleophile in catalysis. 5 residues coordinate L-glutamine: L270, Q273, N311, G313, and F314. Residues H353 and E355 contribute to the active site.

The protein belongs to the CarA family. In terms of assembly, composed of two chains; the small (or glutamine) chain promotes the hydrolysis of glutamine to ammonia, which is used by the large (or ammonia) chain to synthesize carbamoyl phosphate. Tetramer of heterodimers (alpha,beta)4.

It carries out the reaction hydrogencarbonate + L-glutamine + 2 ATP + H2O = carbamoyl phosphate + L-glutamate + 2 ADP + phosphate + 2 H(+). The catalysed reaction is L-glutamine + H2O = L-glutamate + NH4(+). It participates in amino-acid biosynthesis; L-arginine biosynthesis; carbamoyl phosphate from bicarbonate: step 1/1. The protein operates within pyrimidine metabolism; UMP biosynthesis via de novo pathway; (S)-dihydroorotate from bicarbonate: step 1/3. Small subunit of the glutamine-dependent carbamoyl phosphate synthetase (CPSase). CPSase catalyzes the formation of carbamoyl phosphate from the ammonia moiety of glutamine, carbonate, and phosphate donated by ATP, constituting the first step of 2 biosynthetic pathways, one leading to arginine and/or urea and the other to pyrimidine nucleotides. The small subunit (glutamine amidotransferase) binds and cleaves glutamine to supply the large subunit with the substrate ammonia. In Pseudomonas syringae pv. tomato (strain ATCC BAA-871 / DC3000), this protein is Carbamoyl phosphate synthase small chain.